A 1052-amino-acid chain; its full sequence is Ubiquitin-like modifier-activating enzyme 6 (1052 aa).

N-acetylmethionine is present on Met-1. The disordered stretch occupies residues 1–21 (MEGSEPVAAHQGEEASCSSWG). Arg-46 serves as a coordination point for ATP. A Phosphothreonine modification is found at Thr-54. At Ser-301 the chain carries Phosphoserine. ATP contacts are provided by Ala-470 and Asp-497. Positions 499 and 502 each coordinate Mg(2+). ATP contacts are provided by Asn-505, Arg-508, Gln-509, and Lys-521. N6-acetyllysine is present on Lys-544. Val-545 contacts ATP. Asp-569 is a Mg(2+) binding site. Asn-570 contacts ATP. The Glycyl thioester intermediate role is filled by Cys-625. At Lys-729 the chain carries N6-acetyllysine. Ser-737 bears the Phosphoserine mark.

The protein belongs to the ubiquitin-activating E1 family. Forms a thioester with UBD in cells stimulated with tumor necrosis factor-alpha (TNFa) and interferon-gamma (IFNg). In terms of tissue distribution, widely expressed. Isoform 2 is predominantly expressed in testis with higher expression in adult testis than in fetal testis.

It carries out the reaction ATP + ubiquitin + [E1 ubiquitin-activating enzyme]-L-cysteine = AMP + diphosphate + S-ubiquitinyl-[E1 ubiquitin-activating enzyme]-L-cysteine.. Its pathway is protein modification; protein ubiquitination. Activates ubiquitin by first adenylating its C-terminal glycine residue with ATP, and thereafter linking this residue to the side chain of a cysteine residue in E1, yielding a ubiquitin-E1 thioester and free AMP. Specific for ubiquitin, does not activate ubiquitin-like peptides. Also activates UBD/FAT10 conjugation via adenylation of its C-terminal glycine. Differs from UBE1 in its specificity for substrate E2 charging. Does not charge cell cycle E2s, such as CDC34. Essential for embryonic development. Isoform 2 may play a key role in ubiquitin system and may influence spermatogenesis and male fertility. In Homo sapiens (Human), this protein is Ubiquitin-like modifier-activating enzyme 6 (UBA6).